A 445-amino-acid polypeptide reads, in one-letter code: C4-dicarboxylate transport protein 2 (445 aa).

Transmembrane regions (helical) follow at residues 24–44 (ILYVQVLIAILIGIVVGWLFP), 62–82 (LIKMVIAPIIFCTVVSGIAHI), 96–116 (LVYFEIVSTFALLLGLIVGNL), 163–183 (GDILQVLLFAILFGFALMALG), 201–221 (FGVIAIVMKAAPVGAFGAMAF), 237–257 (LIALFYITAGLFVVIVLGLIA), 334–354 (ALGVDLSFSQQVTILIVAMLT), and 366–386 (FITLAATLSVVNPALVPGMAI).

Belongs to the dicarboxylate/amino acid:cation symporter (DAACS) (TC 2.A.23) family.

It localises to the cell inner membrane. Functionally, responsible for the transport of dicarboxylates such as succinate, fumarate, and malate from the periplasm across the membrane. The protein is C4-dicarboxylate transport protein 2 of Bradyrhizobium sp. (strain ORS 278).